The following is a 327-amino-acid chain: Phenylalanine--tRNA ligase alpha subunit (327 aa).

Position 252 (glutamate 252) interacts with Mg(2+).

It belongs to the class-II aminoacyl-tRNA synthetase family. Phe-tRNA synthetase alpha subunit type 1 subfamily. In terms of assembly, tetramer of two alpha and two beta subunits. Mg(2+) serves as cofactor.

It localises to the cytoplasm. It catalyses the reaction tRNA(Phe) + L-phenylalanine + ATP = L-phenylalanyl-tRNA(Phe) + AMP + diphosphate + H(+). The protein is Phenylalanine--tRNA ligase alpha subunit of Proteus mirabilis (strain HI4320).